Reading from the N-terminus, the 500-residue chain is Protein DML1 (500 aa).

Belongs to the misato family.

It localises to the mitochondrion. Functionally, involved in the partitioning of the mitochondrial organelle and mitochondrial DNA (mtDNA) inheritance. This chain is Protein DML1 (DML1), found in Scheffersomyces stipitis (strain ATCC 58785 / CBS 6054 / NBRC 10063 / NRRL Y-11545) (Yeast).